An 85-amino-acid polypeptide reads, in one-letter code: Large ribosomal subunit protein bL31B (85 aa).

The protein belongs to the bacterial ribosomal protein bL31 family. Type B subfamily. Part of the 50S ribosomal subunit.

This is Large ribosomal subunit protein bL31B from Aliivibrio salmonicida (strain LFI1238) (Vibrio salmonicida (strain LFI1238)).